The following is a 153-amino-acid chain: Arginine repressor (153 aa).

The protein belongs to the ArgR family.

It localises to the cytoplasm. It functions in the pathway amino-acid biosynthesis; L-arginine biosynthesis [regulation]. Regulates arginine biosynthesis genes. In Syntrophomonas wolfei subsp. wolfei (strain DSM 2245B / Goettingen), this protein is Arginine repressor.